The following is a 164-amino-acid chain: Oocyte-expressed protein homolog (164 aa).

The KH; atypical domain occupies 44-105 (PLVLYMEAWV…SAQTRMKNIL (62 aa)).

Belongs to the KHDC1 family. In terms of assembly, component of the subcortical maternal complex (SCMC), at least composed of NLRP5, KHDC3, OOEP, and TLE6. Within the complex, interacts with NLRP5, KHDC3 and TLE6. The SCMC may facilitate translocation of its components between the nuclear and cytoplasmic compartments. As part of the SCMC interacts with the SCMC-associated protein NLRP4F. Forms a scaffold complex with KHDC3/FILIA, and interacts with BLM and TRIM25 at DNA replication forks. In terms of tissue distribution, expressed in ovaries, where it is restricted to growing oocytes, with greatest levels in fully grown oocytes.

The protein localises to the cytoplasm. The protein resides in the nucleus. Functionally, component of the subcortical maternal complex (SCMC), a multiprotein complex that plays a key role in early embryonic development. The SCMC complex is a structural constituent of cytoplasmic lattices, which consist in fibrous structures found in the cytoplasm of oocytes and preimplantation embryos. They are required to store maternal proteins critical for embryonic development, such as proteins that control epigenetic reprogramming of the preimplantation embryo, and prevent their degradation or activation. As part of the OOEP-KHDC3 scaffold, recruits BLM and TRIM25 to DNA replication forks, thereby promoting the ubiquitination of BLM by TRIM25, enhancing BLM retainment at replication forks and therefore promoting stalled replication fork restart. Positively regulates the homologous recombination-mediated DNA double-strand break (DSB) repair pathway by regulating ATM activation and RAD51 recruitment to DSBs in oocytes. Thereby contributes to oocyte survival and the resumption and completion of meiosis. This is Oocyte-expressed protein homolog from Mus musculus (Mouse).